We begin with the raw amino-acid sequence, 380 residues long: Cytochrome b (380 aa).

A run of 4 helical transmembrane segments spans residues 34 to 54, 78 to 99, 114 to 134, and 179 to 199; these read FGSLLALCLMTQILTGLLLAM, WLIRNMHANGASFFFICIYMHI, WNTGILLLLTLMATAFVGYVL, and FFALHFLLPFMIAGLTLIHLT. Residues histidine 84 and histidine 98 each contribute to the heme b site. Histidine 183 and histidine 197 together coordinate heme b. Histidine 202 is a binding site for a ubiquinone. Transmembrane regions (helical) follow at residues 227–247, 289–309, 321–341, and 348–368; these read LKDILGLTLLLLPLTTMALFS, LGGVLALAASVLVLFLSPLLH, LSQLLFWTLVANLLILTWIGS, and FIIIGQLASTTYFIILLILFP.

Belongs to the cytochrome b family. The cytochrome bc1 complex contains 11 subunits: 3 respiratory subunits (MT-CYB, CYC1 and UQCRFS1), 2 core proteins (UQCRC1 and UQCRC2) and 6 low-molecular weight proteins (UQCRH/QCR6, UQCRB/QCR7, UQCRQ/QCR8, UQCR10/QCR9, UQCR11/QCR10 and a cleavage product of UQCRFS1). This cytochrome bc1 complex then forms a dimer. It depends on heme b as a cofactor.

The protein localises to the mitochondrion inner membrane. Component of the ubiquinol-cytochrome c reductase complex (complex III or cytochrome b-c1 complex) that is part of the mitochondrial respiratory chain. The b-c1 complex mediates electron transfer from ubiquinol to cytochrome c. Contributes to the generation of a proton gradient across the mitochondrial membrane that is then used for ATP synthesis. This chain is Cytochrome b (MT-CYB), found in Hydrobates pelagicus (European storm-petrel).